We begin with the raw amino-acid sequence, 638 residues long: DNA gyrase subunit B (638 aa).

Residues 423–537 (CEVYIVEGDS…KGHVYLAMPP (115 aa)) enclose the Toprim domain. The Mg(2+) site is built by Glu429, Asp502, and Asp504.

Belongs to the type II topoisomerase GyrB family. Heterotetramer, composed of two GyrA and two GyrB chains. In the heterotetramer, GyrA contains the active site tyrosine that forms a transient covalent intermediate with DNA, while GyrB binds cofactors and catalyzes ATP hydrolysis. It depends on Mg(2+) as a cofactor. Mn(2+) serves as cofactor. Ca(2+) is required as a cofactor.

The protein resides in the cytoplasm. The enzyme catalyses ATP-dependent breakage, passage and rejoining of double-stranded DNA.. In terms of biological role, a type II topoisomerase that negatively supercoils closed circular double-stranded (ds) DNA in an ATP-dependent manner to modulate DNA topology and maintain chromosomes in an underwound state. Negative supercoiling favors strand separation, and DNA replication, transcription, recombination and repair, all of which involve strand separation. Also able to catalyze the interconversion of other topological isomers of dsDNA rings, including catenanes and knotted rings. Type II topoisomerases break and join 2 DNA strands simultaneously in an ATP-dependent manner. This chain is DNA gyrase subunit B, found in Treponema denticola (strain ATCC 35405 / DSM 14222 / CIP 103919 / JCM 8153 / KCTC 15104).